We begin with the raw amino-acid sequence, 543 residues long: Sodium/glucose cotransporter (543 aa).

14 consecutive transmembrane segments (helical) span residues 10-30 (FIDI…GLWV), 45-65 (FLAG…AANI), 79-99 (SIGL…IIVG), 129-149 (ILAV…VLYL), 156-176 (TILG…ALVY), 193-213 (VFFL…FIGG), 246-266 (LPGI…YWGF), 287-307 (IVFA…PGIA), 345-365 (FLPV…IVSS), 401-421 (TAAV…GGIG), 427-447 (IQEY…LGLF), 455-475 (GAII…FMPL), 483-503 (MLYT…STSI), and 523-543 (SFNI…TLFW).

The protein localises to the cell membrane. Its function is as follows. Actively transports glucose into cells by Na(+) cotransport. The sequence is that of Sodium/glucose cotransporter (sglT) from Vibrio parahaemolyticus.